A 101-amino-acid chain; its full sequence is Helix-loop-helix protein 17 (101 aa).

Residues 14 to 27 (GVRLSINLRERCRM) are basic motif. The bHLH domain maps to 14–68 (GVRLSINLRERCRMHDLNEALDDLRAVIPYAHGGSVRKLSKIATLLLAKNHIIMQ). Positions 28–68 (HDLNEALDDLRAVIPYAHGGSVRKLSKIATLLLAKNHIIMQ) are helix-loop-helix motif.

As to expression, expressed in neuronal tissues of the head, including sheath cells of the cephalic sensilla (CEPsh) glia.

Its subcellular location is the nucleus. In terms of biological role, probable transcription factor that regulates the expression of dopamine receptors dop-1, dop-2 and dop-3 and thus dopamine-dependent behaviors. May act redundantly with hlh-31 and hlh-32 to regulate ventral CEPsh glia functions. May play a role in chemotactic responses in larvae. This chain is Helix-loop-helix protein 17, found in Caenorhabditis elegans.